The following is a 238-amino-acid chain: Ribose-5-phosphate isomerase A (238 aa).

Residues 30 to 33 (SGST), 87 to 90 (DGAD), and 100 to 103 (KGGG) each bind substrate. E109 acts as the Proton acceptor in catalysis. Residue K127 participates in substrate binding.

This sequence belongs to the ribose 5-phosphate isomerase family. Homodimer.

The enzyme catalyses aldehydo-D-ribose 5-phosphate = D-ribulose 5-phosphate. Its pathway is carbohydrate degradation; pentose phosphate pathway; D-ribose 5-phosphate from D-ribulose 5-phosphate (non-oxidative stage): step 1/1. In terms of biological role, catalyzes the reversible conversion of ribose-5-phosphate to ribulose 5-phosphate. This is Ribose-5-phosphate isomerase A from Synechococcus sp. (strain CC9311).